Here is a 914-residue protein sequence, read N- to C-terminus: Solute carrier family 12 member 9 (914 aa).

At 1–36 (MASESSPLLAYRLLGEEGAAFPPNGAGVSGVPSSRK) the chain is on the cytoplasmic side. S6 carries the phosphoserine modification. A helical membrane pass occupies residues 37–57 (LSTFLGVVVPTVLSMFSIVVF). Residues 58–72 (LRIGFVVGHAGLLQA) lie on the Extracellular side of the membrane. Residues 73-93 (LAMLLVAYIILALTVLSVCAI) traverse the membrane as a helical segment. Over 94–119 (ATNGAVRGGGAYFMISRTLGPEVGGS) the chain is Cytoplasmic. Residues 120-140 (IGLMFYLANVCGCAVSLLGLV) form a helical membrane-spanning segment. The Extracellular portion of the chain corresponds to 141 to 167 (ESILDVFGADATGSSGIQVLPQGYGWN). Residues 168–188 (LLYGSLLLGLVGGVCTLGAGL) traverse the membrane as a helical segment. Topologically, residues 189-193 (YARAS) are cytoplasmic. The chain crosses the membrane as a helical span at residues 194–214 (FLTFLLVSGSLASVLVSFVAV). The Extracellular portion of the chain corresponds to 215 to 262 (GPRNIPLAPRPGTNASSVPHRHGHFTGFNGSTLRDNLGAGYAEDYTTG). N-linked (GlcNAc...) asparagine glycosylation is found at N228 and N243. A helical membrane pass occupies residues 263 to 283 (AMMTFASVFAVLFNGCTGIMA). Topologically, residues 284–297 (GANMSGELKDPSRA) are cytoplasmic. A helical membrane pass occupies residues 298 to 318 (IPLGTIIAVAYTFFIYILLFF). The Extracellular segment spans residues 319-338 (LSSFTCDRALLQEDYGFFRD). Residues 339–359 (ISLWPPLVLIGIYATALSASM) traverse the membrane as a helical segment. At 360–376 (SSLIGASRILHALAQDD) the chain is on the cytoplasmic side. The chain crosses the membrane as a helical span at residues 377–399 (LFGVILAPAKVVSGGGNPWGAVL). Topologically, residues 400 to 416 (YSWGLVQLVLLAGKLNT) are extracellular. A helical membrane pass occupies residues 417–437 (LAAVVTVFYLVAYAAVDLSCL). At 438 to 466 (SLEWASAPNFRPTFSLFSWHTCLLGVASC) the chain is on the cytoplasmic side. The helical transmembrane segment at 467 to 487 (LLMMFLISPGAAGGSLLLMGL) threads the bilayer. At 488 to 740 (LSALLTARGG…LLRPRGGPGY (253 aa)) the chain is on the extracellular side. The disordered stretch occupies residues 645–678 (PAFSEPAEGTREGGSPALSTLFPPPRAPGSPRAL). The chain crosses the membrane as a helical span at residues 741-761 (VDVCGLFLLQMATILSMVPAW). At 762 to 914 (HSARLRIFLC…GVTPVTCTDL (153 aa)) the chain is on the cytoplasmic side. The tract at residues 844–864 (QGRGTVGGPGGPEGRDGEEGP) is disordered.

This sequence belongs to the SLC12A transporter family. As to quaternary structure, interacts with SLC12A1.

Its subcellular location is the cell membrane. The protein localises to the lysosome membrane. In terms of biological role, may be an inhibitor of SLC12A1. Seems to correspond to a subunit of a multimeric transport system and thus, additional subunits may be required for its function. May play a role in lysosomal ion flux and osmoregulation. This chain is Solute carrier family 12 member 9 (Slc12a9), found in Mus musculus (Mouse).